The following is a 664-amino-acid chain: Alcohol oxidase (664 aa).

FAD is bound at residue 8–39 (DIIVVGGGSTGCCIAGRLANLDDQNLTVALIE). His568 functions as the Proton acceptor in the catalytic mechanism. The Microbody targeting signal signature appears at 662–664 (ARF).

This sequence belongs to the GMC oxidoreductase family. As to quaternary structure, homooctamer. It depends on FAD as a cofactor.

Its subcellular location is the peroxisome matrix. The enzyme catalyses a primary alcohol + O2 = an aldehyde + H2O2. The protein operates within energy metabolism; methane degradation. Catalyzes the oxidation of methanol to formaldehyde and hydrogen peroxide, the first step in the methanol utilization pathway of methylotrophic yeasts. This is Alcohol oxidase (MOX) from Pichia angusta (Yeast).